A 198-amino-acid polypeptide reads, in one-letter code: Recombination protein RecR (198 aa).

A C4-type zinc finger spans residues 57-72 (CSVCGHITDKDPCYIC). Positions 80–175 (SVICVVQESK…KVTRIAHGLP (96 aa)) constitute a Toprim domain.

This sequence belongs to the RecR family.

Its function is as follows. May play a role in DNA repair. It seems to be involved in an RecBC-independent recombinational process of DNA repair. It may act with RecF and RecO. This Listeria welshimeri serovar 6b (strain ATCC 35897 / DSM 20650 / CCUG 15529 / CIP 8149 / NCTC 11857 / SLCC 5334 / V8) protein is Recombination protein RecR.